A 77-amino-acid chain; its full sequence is Conotoxin Vc1 (77 aa).

The first 22 residues, 1 to 22 (MRTSGRLLLLCLAVGLLLESQA), serve as a signal peptide directing secretion. 2 propeptides span residues 23-58 (HPNA…KGQR) and 73-77 (RRSFY).

It belongs to the conotoxin H superfamily. As to expression, expressed by the venom duct.

It localises to the secreted. Functionally, probable toxin. This is Conotoxin Vc1 from Conus victoriae (Queen Victoria cone).